Reading from the N-terminus, the 732-residue chain is 1,4-alpha-glucan branching enzyme GlgB (732 aa).

Catalysis depends on aspartate 415, which acts as the Nucleophile. Residue glutamate 468 is the Proton donor of the active site.

It belongs to the glycosyl hydrolase 13 family. GlgB subfamily. As to quaternary structure, monomer.

It carries out the reaction Transfers a segment of a (1-&gt;4)-alpha-D-glucan chain to a primary hydroxy group in a similar glucan chain.. Its pathway is glycan biosynthesis; glycogen biosynthesis. Its function is as follows. Catalyzes the formation of the alpha-1,6-glucosidic linkages in glycogen by scission of a 1,4-alpha-linked oligosaccharide from growing alpha-1,4-glucan chains and the subsequent attachment of the oligosaccharide to the alpha-1,6 position. The polypeptide is 1,4-alpha-glucan branching enzyme GlgB (Nitrosomonas eutropha (strain DSM 101675 / C91 / Nm57)).